A 74-amino-acid polypeptide reads, in one-letter code: NAD(P)H-quinone oxidoreductase subunit L (74 aa).

2 helical membrane-spanning segments follow: residues 5 to 25 (LIIA…VPAA) and 43 to 63 (AFMY…APLL).

This sequence belongs to the complex I NdhL subunit family. NDH-1 can be composed of about 15 different subunits; different subcomplexes with different compositions have been identified which probably have different functions.

The protein localises to the cellular thylakoid membrane. The catalysed reaction is a plastoquinone + NADH + (n+1) H(+)(in) = a plastoquinol + NAD(+) + n H(+)(out). The enzyme catalyses a plastoquinone + NADPH + (n+1) H(+)(in) = a plastoquinol + NADP(+) + n H(+)(out). In terms of biological role, NDH-1 shuttles electrons from an unknown electron donor, via FMN and iron-sulfur (Fe-S) centers, to quinones in the respiratory and/or the photosynthetic chain. The immediate electron acceptor for the enzyme in this species is believed to be plastoquinone. Couples the redox reaction to proton translocation, and thus conserves the redox energy in a proton gradient. Cyanobacterial NDH-1 also plays a role in inorganic carbon-concentration. The protein is NAD(P)H-quinone oxidoreductase subunit L of Synechococcus elongatus (strain ATCC 33912 / PCC 7942 / FACHB-805) (Anacystis nidulans R2).